The sequence spans 317 residues: E3 ubiquitin-protein ligase NRDP1 (317 aa).

Residues 18–57 (CPICSGVLEEPVQAPHCEHAFCNACITQWFSQQQTCPVDR) form an RING-type; degenerate zinc finger. The SIAH-type; degenerate zinc-finger motif lies at 78–138 (KLQIACDNAV…LPNHNCIKHL (61 aa)).

As to quaternary structure, interacts with USP8, ERBB3, PRKN and BIRC6. Interacts with CSF2RB, EPOR, IL3RA, MYD88 and TBK1. Interacts with CLEC16A. Post-translationally, autoubiquitinated. Autoubiquitination leads to proteasomal degradation. Deubiquitinated by USP8 to get stabilized which induces apoptosis. In terms of tissue distribution, detected in ovary, testis and prostate.

It carries out the reaction S-ubiquitinyl-[E2 ubiquitin-conjugating enzyme]-L-cysteine + [acceptor protein]-L-lysine = [E2 ubiquitin-conjugating enzyme]-L-cysteine + N(6)-ubiquitinyl-[acceptor protein]-L-lysine.. The protein operates within protein modification; protein ubiquitination. Functionally, acts as E3 ubiquitin-protein ligase and regulates the degradation of target proteins. Polyubiquitinates MYD88. Negatively regulates MYD88-dependent production of pro-inflammatory cytokines. Can promote TRIF-dependent production of type I interferon and inhibits infection with vesicular stomatitis virus. Promotes also activation of TBK1 and IRF3. Involved in the ubiquitination of erythropoietin (EPO) and interleukin-3 (IL-3) receptors. Thus, through maintaining basal levels of cytokine receptors, RNF41 is involved in the control of hematopoietic progenitor cell differentiation into myeloerythroid lineages. Contributes to the maintenance of steady-state ERBB3 levels by mediating its growth factor-independent degradation. Involved in the degradation of the inhibitor of apoptosis BIRC6 and thus is an important regulator of cell death by promoting apoptosis. Also acts as a PRKN modifier that accelerates its degradation, resulting in a reduction of PRKN activity, influencing the balance of intracellular redox state. The RNF41-PRKN pathway regulates autophagosome-lysosome fusion during late mitophagy. Mitophagy is a selective form of autophagy necessary for mitochondrial quality control. The polypeptide is E3 ubiquitin-protein ligase NRDP1 (RNF41) (Homo sapiens (Human)).